The following is a 557-amino-acid chain: Carboxypeptidase Y homolog A (557 aa).

The N-terminal stretch at 1-17 (MRVLPAAMLVGAATAAV) is a signal peptide. The propeptide occupies 18 to 138 (PPFQQVLGGN…KLEAYDLRVK (121 aa)). 5 disulfide bridges follow: Cys-193/Cys-433, Cys-327/Cys-341, Cys-351/Cys-374, Cys-358/Cys-367, and Cys-396/Cys-403. N-linked (GlcNAc...) asparagine glycosylation occurs at Asn-224. Residue Ser-280 is part of the active site. The active site involves Asp-472. Asn-523 carries an N-linked (GlcNAc...) asparagine glycan. Residue His-534 is part of the active site.

Belongs to the peptidase S10 family.

It localises to the vacuole. It carries out the reaction Release of a C-terminal amino acid with broad specificity.. Vacuolar carboxypeptidase involved in degradation of small peptides. Digests preferentially peptides containing an aliphatic or hydrophobic residue in P1' position, as well as methionine, leucine or phenylalanine in P1 position of ester substrate. The polypeptide is Carboxypeptidase Y homolog A (cpyA) (Aspergillus niger (strain ATCC MYA-4892 / CBS 513.88 / FGSC A1513)).